The following is a 669-amino-acid chain: RNA-binding protein 14 (669 aa).

2 RRM domains span residues Met-1–Pro-73 and Trp-79–Lys-149. Glycyl lysine isopeptide (Lys-Gly) (interchain with G-Cter in SUMO2) cross-links involve residues Lys-126, Lys-135, Lys-138, Lys-149, and Lys-153. Disordered stretches follow at residues Ser-147–Phe-175 and Asn-193–Ala-232. Ser-161 bears the Phosphoserine mark. Lys-164 carries the post-translational modification N6-acetyllysine; alternate. Residue Lys-164 forms a Glycyl lysine isopeptide (Lys-Gly) (interchain with G-Cter in SUMO2); alternate linkage. Residue Thr-206 is modified to Phosphothreonine. Ser-220, Ser-242, Ser-244, Ser-256, Ser-272, and Ser-280 each carry phosphoserine. The disordered stretch occupies residues Pro-284–Gly-303. Over residues Gly-287 to Gly-303 the composition is skewed to low complexity. The interval Gly-307–Ser-354 is TRBP-interacting domain; interaction with STIL. Phosphoserine occurs at positions 520, 523, 527, and 562. Residues Val-566–Tyr-592 form a disordered region. Thr-572 is subject to Phosphothreonine. Ser-582 bears the Phosphoserine mark. Residue Lys-600 forms a Glycyl lysine isopeptide (Lys-Gly) (interchain with G-Cter in SUMO2) linkage. Phosphoserine occurs at positions 618, 620, 623, 627, 643, and 649.

Interacts with NCOA6, CITED1 and XRCC5/KU86. Interacts with SS18. Interacts with STIL and interferes with its interaction with CPAP. Interacts with gamma-tubulin. Part of the HDP-RNP complex composed of at least HEXIM1, PRKDC, XRCC5, XRCC6, paraspeckle proteins (SFPQ, NONO, PSPC1, RBM14, and MATR3) and NEAT1 RNA.

The protein localises to the nucleus. It localises to the nucleolus. The protein resides in the cytoplasm. In terms of biological role, may function as a nuclear receptor coactivator, enhancing transcription through other coactivators such as NCOA6 and CITED1. Regulates centriole biogenesis by suppressing the formation of aberrant centriolar protein complexes in the cytoplasm and thus preserving mitotic spindle integrity. Prevents the formation of the STIL-CPAP complex (which can induce the formation of aberrant centriolar protein complexes) by interfering with the interaction of STIL with CPAP. Plays a role in the regulation of DNA virus-mediated innate immune response by assembling into the HDP-RNP complex, a complex that serves as a platform for IRF3 phosphorylation and subsequent innate immune response activation through the cGAS-STING pathway. The chain is RNA-binding protein 14 (RBM14) from Pongo abelii (Sumatran orangutan).